A 487-amino-acid chain; its full sequence is UDP-N-acetylmuramate--L-alanine ligase (487 aa).

ATP is bound at residue 130 to 136; that stretch reads GTHGKTT.

The protein belongs to the MurCDEF family.

The protein localises to the cytoplasm. It catalyses the reaction UDP-N-acetyl-alpha-D-muramate + L-alanine + ATP = UDP-N-acetyl-alpha-D-muramoyl-L-alanine + ADP + phosphate + H(+). It functions in the pathway cell wall biogenesis; peptidoglycan biosynthesis. In terms of biological role, cell wall formation. This chain is UDP-N-acetylmuramate--L-alanine ligase, found in Photobacterium profundum (strain SS9).